The following is a 2336-amino-acid chain: MNTTDCFIALLYALREIKAFLLSRTQGKMELTLYNGEKKTFYSRPNNHDNCWLNTILQLFRYVDEPFFDWVYDSPENLTCEAIRQLEEITGLELHEGGPPALVIWNIKHLLHTGIGTASRPSEVCMVDGTDMCLADFHAGIFLKGQEHAVFACVTSDGWYAIDDEDFYPWTPDPSDVLVFVPYDQEPLNGEWKAKVQKRLKGAGQSSPATGSQNQSGNTGSIINNYYMQQYQNSMDTQLGDNAISGGSNEGSTDTTSTHTTNTQNNDWFSKLASSAFSGLFGALLADKKTEETTLLEDRILTTRNGHTTSTTQSSVGVTYGYSTQEDHVSGPNTSGLETRVVQAERFFKKYLFDWTPDKAFGHLEKLELPTDHKGVYGHLVDSFAYMRNGWDVEVSAVGNQFNGGCLLVAMVPEWKELTPREKYQLTLFPHQFISPRTNMTAHIVVPYLGVNRYDQYKKHKPWTLVVMVVSPLTTNTVSAGQIKVYANIAPTHVHVAGELPSKEGIVPVACSDGYGGLVTTDPKTADPVYGMVYNPPRTNYPGRFTNLLDVAEACPTFLCFDDGKPYVVTRTDEQRLLAKFDLSLAAKHMSNTYLSGIAQYYAQYSGTINLHFMFTGSTDSKARYMVAYVPPGVETPPDTPEKAAHCIHAEWDTGLNSKFTFSIPYVSAADYAYTASDVAETTNVQGWVCIYQITHGKAEQDTLVVSVSAGKDFELRLPIDPRSQTTSTGESADPVTTTVENYGGETQVQRRQHTDVTFIMDRFVKIQNLNPIHVIDLMQTHQHGLVGALLRAATYYFSDLEIVVRHDGNLTWVPNGAPEAALSNMGNPTAYPKAPFTRLALPYTAPHRVLATVYNGTGKYSAGGMGRRGDLEPLAARVAAQLPTSFNFGAIQATTIHELLVRMKRAELYCPRPLLAVEVSSQDRHKQKIIAPAKQLLNFDLLKLAGDVESNPGPFFFSDVRSNFSKLVETINQMQEDMSTKHGPDFNRLVSAFEELATGVKAIRTGLDEAKPWYKLIKLLSRLSCMAAVAARSKDPVLVAIMLADTGLEILDSTFVVKKISDSLSSLFHVPAPVFSFGAPILLAGLVKVASSFFRSTPEDLERAEKQLKARDINDIFAILKNGEWLVKLILAIRDWIKAWIASEEKFVTMTDLVPGILEKQRDLNDPSKYKEAKEWLDSARQACLKNGNVHIANLCKVVTPAPSKSRPEPVVVCLRGKSGQGKSFLANVLAQAISTHFTGRIDSVWYCPPDPDHFDGYNQQTVVVMDDLGQNPDGKDFKYFAQMVSTTGFIPPMASLEDKGKPFNSKVIITTTNLYSGFTPRTMVCPDALNRRFHFDIDVSAKDGYKVNNKLDITKALEDTHTNPVAMFKYDCALLNGMAVEMKRMQQDMFKPQPPLQNVYQLVQEVIERVELHEKVSSHQIFKQISIPSQKSVLYFLIEKGQHEAAIEFFEGLVHDSIKEELRPLIQQTSFVKRAFKRLKENFEIVALCLTLLANIVIMIRETRKRQQMVDDAVNEYIEKANITTDDKTLDEAEKNPLETSGVSIVGFRERTLPGHRASDDVNSEPARPVEEQPQAEGPYTGPLERQKPLKVKAKLPQQEGPYAGPMERQKPLKVKVKAPVVKEGPYEGPVKKPVALKVKAKNLIVTESGAPPTDLQKMVMGNTKPVELILDGKTVAICCATGVFGTAYLVPRHLFAEKYDKIMLDGRAMTDSDYRVFEFEIKVKGQDMLSDAALMVLHRGNRVRDITKHFRDTARMKKGTPVVGVINNADVGRLIFSGEALTYKDIVVCMDGDTMPGLFAYKAATKAGYCGGAVLAKDGADTFIVGTHSAGGNGVGYCSCVSRSMLLKMKAHIDPEPHHEGLIVDTRDVEERVHVMRKTKLAPTVAHGVFNPEFGPAALSNKDPRLNEGVVLDEVIFSKHKGDTKMTEEDKALFRRCAADYASRLHNVLGTANAPLSIYEAIKGVDGLDAMEPDTAPGLPWALQGKRRGTLIDFENGTVGPEVASALELMEKRQYKFTCQTFLKDEVRPMEKVRAGKTRIVDVLPVEHILYTRMMIGRFCAQMHSNNGPQIGSAVGCNPDVDWQRFGTHFAQYKNVWDVDYSAFDANHCSDAMNIMFEEVFRTEFGFHPNAEWILKTLVNTEHAYENKRITVEGGMPSGCSATSIINTILNNIYVLYALRRHYEGVELDTYTMISYGDDIVVASDYDLDFEALKPHFKSLGQTITPADKSDKGFVLGQSITDVTFLKRHFRMDYGTGFYKPVMASKTLEAILSFARRGTIQEKLISVAGLAVHSGPDEYRRLFEPFQGLFEIPSYRSLYLRWVNAVCGDAQSL.

One can recognise a Peptidase C28 domain in the interval 1–201 (MNTTDCFIAL…WKAKVQKRLK (201 aa)). At 1 to 1481 (MNTTDCFIAL…SFVKRAFKRL (1481 aa)) the chain is on the cytoplasmic side. Residues C51, H148, and D163 each act as for leader protease activity in the active site. 2 disordered regions span residues 197–218 (QKRL…QSGN) and 238–265 (QLGD…NTQN). G202 carries N-myristoyl glycine; by host lipidation. 2 stretches are compositionally biased toward polar residues: residues 204-218 (GQSS…QSGN) and 238-251 (QLGD…SNEG). The segment covering 252–265 (STDTTSTHTTNTQN) has biased composition (low complexity). An antigenic epitope region spans residues 789-797 (ALLRAATYY). Positions 869–871 (RGD) match the Cell attachment site motif. Residues 1190-1354 (NVHIANLCKV…DGYKVNNKLD (165 aa)) form the SF3 helicase domain. 1218-1225 (GKSGQGKS) serves as a coordination point for ATP. The stretch at 1482 to 1502 (KENFEIVALCLTLLANIVIMI) is an intramembrane region. Topologically, residues 1503–2336 (RETRKRQQMV…NAVCGDAQSL (834 aa)) are cytoplasmic. The disordered stretch occupies residues 1556–1591 (PGHRASDDVNSEPARPVEEQPQAEGPYTGPLERQKP). 3 positions are modified to O-(5'-phospho-RNA)-tyrosine: Y1582, Y1605, and Y1629. One can recognise a Peptidase C3 domain in the interval 1653–1849 (APPTDLQKMV…YCSCVSRSML (197 aa)). H1696 serves as the catalytic For protease 3C activity; Proton donor/acceptor. Residues D1734 and C1813 each act as for protease 3C activity in the active site. The Nuclear localization signal motif lies at 1879–1887 (MRKTKLAPT). In terms of domain architecture, RdRp catalytic spans 2097–2215 (KNVWDVDYSA…ASDYDLDFEA (119 aa)). Catalysis depends on D2201, which acts as the For RdRp activity.

It belongs to the picornaviruses polyprotein family. In terms of assembly, interacts with host ISG15. Interacts (via R-G-D motif) with host ITGAV/ITGB6. Interacts with host MAVS; this interaction inhibits binding of host TRAF3 to MAVS, thereby suppressing interferon-mediated responses. As to quaternary structure, forms homooligomers. In terms of assembly, homohexamer. Interacts with host VIM. Interacts with host BECN1. Interacts with host DCTN3. As to quaternary structure, interacts with RNA-dependent RNA polymerase; this interaction allows 3B-1 to binds 2 polymerases and act as a primer. It also allows the recruitment of the RNA-dependent RNA polymerase to host membranes. In terms of assembly, interacts with RNA-dependent RNA polymerase; this interaction allows 3B-2 to act as a primer. Interacts with RNA-dependent RNA polymerase; this interaction allows 3B-3 to act as a primer. As to quaternary structure, interacts with 3B-1; this interaction allows 3B-1 to binds 2 polymerases and act as a primer. It also allows the recruitment of the RNA-dependent RNA polymerase to host membranes. Interacts with 3B-2; this interaction allows 3B-2 to act as a primer. Interacts with 3B-3; this interaction allows 3B-3 to act as a primer. Post-translationally, removes six residues from its own C-terminus, generating sLb(pro). In terms of processing, specific enzymatic cleavages in vivo by the viral proteases yield a variety of precursors and mature proteins. The polyprotein seems to be cotranslationally cleaved at the 2A/2B junction by a ribosomal skip from one codon to the next without formation of a peptide bond. This process would release the L-P1-2A peptide from the translational complex. During virion maturation, immature virions are rendered infectious following cleavage of VP0 into VP4 and VP2. This maturation seems to be an autocatalytic event triggered by the presence of RNA in the capsid and is followed by a conformational change of the particle. Post-translationally, myristoylation is required during RNA encapsidation and formation of the mature virus particle. In terms of processing, uridylylated by the polymerase and covalently linked to the 5'-end of genomic RNA. These uridylylated forms act as a nucleotide-peptide primer for the polymerase.

It is found in the host nucleus. It localises to the host cytoplasm. The protein localises to the virion. The protein resides in the host endoplasmic reticulum membrane. Its subcellular location is the host cytoplasmic vesicle membrane. The enzyme catalyses Autocatalytically cleaves itself from the polyprotein of the foot-and-mouth disease virus by hydrolysis of a Lys-|-Gly bond, but then cleaves host cell initiation factor eIF-4G at bonds -Gly-|-Arg- and -Lys-|-Arg-.. The catalysed reaction is a ribonucleoside 5'-triphosphate + H2O = a ribonucleoside 5'-diphosphate + phosphate + H(+). It carries out the reaction RNA(n) + a ribonucleoside 5'-triphosphate = RNA(n+1) + diphosphate. It catalyses the reaction Selective cleavage of Gln-|-Gly bond in the poliovirus polyprotein. In other picornavirus reactions Glu may be substituted for Gln, and Ser or Thr for Gly.. In terms of biological role, autocatalytically cleaves itself from the polyprotein at the L/VP0 junction. Also cleaves the host translation initiation factors EIF4G1 and EIF4G3, in order to shut off the capped cellular mRNA transcription. Plays a role in counteracting host innate antiviral response using diverse mechanisms. Possesses a deubiquitinase activity acting on both 'Lys-48' and 'Lys-63'-linked polyubiquitin chains. In turn, inhibits the ubiquitination and subsequent activation of key signaling molecules of type I IFN response such as host RIGI, TBK1, TRAF3 and TRAF6. Inhibits host NF-kappa-B activity by inducing a decrease in RELA mRNA levels. Cleaves a peptide bond in the C-terminus of host ISG15, resulting in the damaging of this modifier that can no longer be attached to target proteins. Also cleaves host G3BP1 and G3BP2 in order to inhibit cytoplasmic stress granules assembly. Functionally, lies on the inner surface of the capsid shell. After binding to the host receptor, the capsid undergoes conformational changes. Capsid protein VP4 is released, capsid protein VP1 N-terminus is externalized, and together, they shape a pore in the host membrane through which the viral genome is translocated into the host cell cytoplasm. After genome has been released, the channel shrinks. Its function is as follows. Forms an icosahedral capsid of pseudo T=3 symmetry with capsid proteins VP1 and VP3. The capsid is composed of 60 copies of each capsid protein organized in the form of twelve pentamers and encloses the viral positive strand RNA genome. Upon acidifcation in the endosome, dissociates into pentamers. Forms an icosahedral capsid of pseudo T=3 symmetry with capsid proteins VP0 and VP3. The capsid is composed of 60 copies of each capsid protein organized in the form of twelve pentamers and encloses the viral positive strand RNA genome. Upon acidifcation in the endosome, dissociates into pentamers. In terms of biological role, forms an icosahedral capsid of pseudo T=3 symmetry with capsid proteins VP2 and VP3. The capsid is composed of 60 copies of each capsid protein organized in the form of twelve pentamers and encloses the viral positive strand RNA genome. Mediates cell entry by attachment to an integrin receptor, usually host ITGAV/ITGB6. In addition, targets host MAVS to suppress type I IFN pathway. Upon acidifcation in the endosome, dissociates into pentamers. Functionally, mediates self-processing of the polyprotein by a translational effect termed 'ribosome skipping'. Mechanistically, 2A-mediated cleavage occurs between the C-terminal glycine and the proline of the downstream protein 2B. In the case of foot-and-mouth disease virus, the 2A oligopeptide is post-translationally 'trimmed' from the C-terminus of the upstream protein 1D by 3C proteinase. Its function is as follows. Plays an essential role in the virus replication cycle by acting as a viroporin. Creates a pore in the host endoplasmic reticulum and as a consequence releases Ca2+ in the cytoplasm of infected cell. In turn, high levels of cytoplasmic calcium may trigger membrane trafficking and transport of viral ER-associated proteins to viroplasms, sites of viral genome replication. Associates with and induces structural rearrangements of intracellular membranes. Triggers host autophagy by interacting with host BECN1 and thereby promotes viral replication. Participates in viral replication and interacts with host DHX9. Displays RNA-binding, nucleotide binding and NTPase activities. May play a role in virion morphogenesis and viral RNA encapsidation by interacting with the capsid protein VP3. In terms of biological role, plays important roles in virus replication, virulence and host range. Cooperates with host DDX56 to inhibit IRF3 nuclear translocation and subsequent type I interferon production. Functionally, covalently linked to the 5'-end of both the positive-strand and negative-strand genomic RNAs. Acts as a genome-linked replication primer. Its function is as follows. Cysteine protease that generates mature viral proteins from the precursor polyprotein. In addition to its proteolytic activity, binds to viral RNA and thus influences viral genome replication. RNA and substrate bind cooperatively to the protease. RNA-directed RNA polymerase 3D-POL replicates genomic and antigenomic RNA by recognizing replications specific signals. Covalently attaches UMP to a tyrosine of VPg, which is used to prime RNA synthesis. The positive stranded RNA genome is first replicated at virus induced membranous vesicles, creating a dsRNA genomic replication form. This dsRNA is then used as template to synthesize positive stranded RNA genomes. ss(+)RNA genomes are either translated, replicated or encapsidated. The protein is Genome polyprotein of Foot-and-mouth disease virus (isolate -/Azerbaijan/A22-550/1965 serotype A) (FMDV).